A 254-amino-acid polypeptide reads, in one-letter code: Imidazole glycerol phosphate synthase subunit HisF (254 aa).

Residues Asp14 and Asp133 contribute to the active site.

Belongs to the HisA/HisF family. In terms of assembly, heterodimer of HisH and HisF.

Its subcellular location is the cytoplasm. The catalysed reaction is 5-[(5-phospho-1-deoxy-D-ribulos-1-ylimino)methylamino]-1-(5-phospho-beta-D-ribosyl)imidazole-4-carboxamide + L-glutamine = D-erythro-1-(imidazol-4-yl)glycerol 3-phosphate + 5-amino-1-(5-phospho-beta-D-ribosyl)imidazole-4-carboxamide + L-glutamate + H(+). It participates in amino-acid biosynthesis; L-histidine biosynthesis; L-histidine from 5-phospho-alpha-D-ribose 1-diphosphate: step 5/9. IGPS catalyzes the conversion of PRFAR and glutamine to IGP, AICAR and glutamate. The HisF subunit catalyzes the cyclization activity that produces IGP and AICAR from PRFAR using the ammonia provided by the HisH subunit. The chain is Imidazole glycerol phosphate synthase subunit HisF from Nitratiruptor sp. (strain SB155-2).